A 445-amino-acid polypeptide reads, in one-letter code: tRNA-2-methylthio-N(6)-dimethylallyladenosine synthase (445 aa).

An MTTase N-terminal domain is found at 2–117 (QGLYIKSYGC…LPELIVKARK (116 aa)). [4Fe-4S] cluster-binding residues include Cys11, Cys47, Cys80, Cys157, Cys161, and Cys164. Residues 143–374 (KNQKVSAFIS…QELVHKQQLE (232 aa)) form the Radical SAM core domain. One can recognise a TRAM domain in the interval 377–441 (KKMIGETHPV…KNHLTGIIPN (65 aa)).

The protein belongs to the methylthiotransferase family. MiaB subfamily. As to quaternary structure, monomer. Requires [4Fe-4S] cluster as cofactor.

The protein resides in the cytoplasm. The catalysed reaction is N(6)-dimethylallyladenosine(37) in tRNA + (sulfur carrier)-SH + AH2 + 2 S-adenosyl-L-methionine = 2-methylsulfanyl-N(6)-dimethylallyladenosine(37) in tRNA + (sulfur carrier)-H + 5'-deoxyadenosine + L-methionine + A + S-adenosyl-L-homocysteine + 2 H(+). Functionally, catalyzes the methylthiolation of N6-(dimethylallyl)adenosine (i(6)A), leading to the formation of 2-methylthio-N6-(dimethylallyl)adenosine (ms(2)i(6)A) at position 37 in tRNAs that read codons beginning with uridine. This is tRNA-2-methylthio-N(6)-dimethylallyladenosine synthase from Ehrlichia ruminantium (strain Welgevonden).